Here is a 347-residue protein sequence, read N- to C-terminus: Bifunctional methylenetetrahydrofolate dehydrogenase/cyclohydrolase 2, mitochondrial (347 aa).

Substrate contacts are provided by residues 98-102 (YVRNK) and 145-147 (VQL). Residues 214–216 (GRS) and Arg247 each bind NAD(+). 323–327 (PGGVG) contributes to the substrate binding site.

Belongs to the tetrahydrofolate dehydrogenase/cyclohydrolase family. It depends on Mg(2+) as a cofactor. In terms of tissue distribution, isoform 1, isoform 4 and isoform 5 are expressed in brain and placenta.

It localises to the mitochondrion inner membrane. It carries out the reaction (6R)-5,10-methylene-5,6,7,8-tetrahydrofolate + NAD(+) = (6R)-5,10-methenyltetrahydrofolate + NADH. The enzyme catalyses (6R)-5,10-methenyltetrahydrofolate + H2O = (6R)-10-formyltetrahydrofolate + H(+). The catalysed reaction is (6R)-5,10-methylene-5,6,7,8-tetrahydrofolate + NADP(+) = (6R)-5,10-methenyltetrahydrofolate + NADPH. It participates in one-carbon metabolism; tetrahydrofolate interconversion. Its function is as follows. Bifunctional mitochondrial folate-interconverting enzyme that has both NAD/NADP-dependent methylenetetrahydrofolate dehydrogenase and methenyltetrahydrofolate cyclohydrolase activities. In Homo sapiens (Human), this protein is Bifunctional methylenetetrahydrofolate dehydrogenase/cyclohydrolase 2, mitochondrial.